A 274-amino-acid polypeptide reads, in one-letter code: Thiamine kinase (274 aa).

Belongs to the thiamine kinase family.

It catalyses the reaction thiamine + ATP = thiamine phosphate + ADP + H(+). The protein operates within cofactor biosynthesis; thiamine diphosphate biosynthesis; thiamine phosphate from thiamine: step 1/1. In terms of biological role, catalyzes the ATP-dependent phosphorylation of thiamine to thiamine phosphate. Is involved in thiamine salvage. The protein is Thiamine kinase of Escherichia coli O6:K15:H31 (strain 536 / UPEC).